The primary structure comprises 288 residues: NH(3)-dependent NAD(+) synthetase (288 aa).

46 to 53 (GISGGQDS) contributes to the ATP binding site. D52 contacts Mg(2+). R153 provides a ligand contact to deamido-NAD(+). Residue T173 coordinates ATP. E178 is a binding site for Mg(2+). The deamido-NAD(+) site is built by K186 and D193. Residues K202 and T224 each coordinate ATP. A deamido-NAD(+)-binding site is contributed by 273–274 (HK).

The protein belongs to the NAD synthetase family. In terms of assembly, homodimer.

It carries out the reaction deamido-NAD(+) + NH4(+) + ATP = AMP + diphosphate + NAD(+) + H(+). It participates in cofactor biosynthesis; NAD(+) biosynthesis; NAD(+) from deamido-NAD(+) (ammonia route): step 1/1. Its function is as follows. Catalyzes the ATP-dependent amidation of deamido-NAD to form NAD. Uses ammonia as a nitrogen source. The polypeptide is NH(3)-dependent NAD(+) synthetase (Deinococcus geothermalis (strain DSM 11300 / CIP 105573 / AG-3a)).